A 318-amino-acid polypeptide reads, in one-letter code: Mediator of RNA polymerase II transcription subunit 30 (318 aa).

Positions Met1 to Pro13 are enriched in low complexity. Disordered regions lie at residues Met1 to Gln92 and Gly120 to Pro142. The span at Ser14 to Met33 shows a compositional bias: gly residues. 3 stretches are compositionally biased toward low complexity: residues Gln34–Gly55, Pro78–Gln92, and Val124–Pro142.

The protein belongs to the Mediator complex subunit 30 family. In terms of assembly, component of the Mediator complex, which includes at least CDK8, MED4, MED6, MED11, MED14, MED17, MED18, MED20, MED21, MED22, MED27, MED28, MED30 and MED31.

The protein localises to the nucleus. Component of the Mediator complex, a coactivator involved in the regulated transcription of nearly all RNA polymerase II-dependent genes. Mediator functions as a bridge to convey information from gene-specific regulatory proteins to the basal RNA polymerase II transcription machinery. Mediator is recruited to promoters by direct interactions with regulatory proteins and serves as a scaffold for the assembly of a functional preinitiation complex with RNA polymerase II and the general transcription factors. The polypeptide is Mediator of RNA polymerase II transcription subunit 30 (MED30) (Drosophila melanogaster (Fruit fly)).